The following is a 457-amino-acid chain: ATP synthase subunit beta (457 aa).

Residue 147–154 (GGAGVGKT) participates in ATP binding.

The protein belongs to the ATPase alpha/beta chains family. F-type ATPases have 2 components, CF(1) - the catalytic core - and CF(0) - the membrane proton channel. CF(1) has five subunits: alpha(3), beta(3), gamma(1), delta(1), epsilon(1). CF(0) has three main subunits: a(1), b(2) and c(9-12). The alpha and beta chains form an alternating ring which encloses part of the gamma chain. CF(1) is attached to CF(0) by a central stalk formed by the gamma and epsilon chains, while a peripheral stalk is formed by the delta and b chains.

It localises to the cell inner membrane. The enzyme catalyses ATP + H2O + 4 H(+)(in) = ADP + phosphate + 5 H(+)(out). Its function is as follows. Produces ATP from ADP in the presence of a proton gradient across the membrane. The catalytic sites are hosted primarily by the beta subunits. The polypeptide is ATP synthase subunit beta (Haemophilus influenzae (strain PittEE)).